Consider the following 464-residue polypeptide: UDP-glycosyltransferase 83A1 (464 aa).

UDP-alpha-D-glucose-binding positions include Ser295, 341–343, 358–366, and 380–383; these read APQ, HCGWNSTLE, and FADQ.

Belongs to the UDP-glycosyltransferase family.

This Arabidopsis thaliana (Mouse-ear cress) protein is UDP-glycosyltransferase 83A1 (UGT83A1).